The primary structure comprises 337 residues: Anthranilate phosphoribosyltransferase (337 aa).

5-phospho-alpha-D-ribose 1-diphosphate is bound by residues glycine 82, glycine 85 to aspartate 86, threonine 90, asparagine 92 to threonine 95, lysine 110 to serine 118, and serine 122. Residue glycine 82 coordinates anthranilate. Serine 94 serves as a coordination point for Mg(2+). Position 168 (arginine 168) interacts with anthranilate. Aspartate 226 and glutamate 227 together coordinate Mg(2+).

Belongs to the anthranilate phosphoribosyltransferase family. In terms of assembly, homodimer. Mg(2+) serves as cofactor.

The enzyme catalyses N-(5-phospho-beta-D-ribosyl)anthranilate + diphosphate = 5-phospho-alpha-D-ribose 1-diphosphate + anthranilate. Its pathway is amino-acid biosynthesis; L-tryptophan biosynthesis; L-tryptophan from chorismate: step 2/5. Catalyzes the transfer of the phosphoribosyl group of 5-phosphorylribose-1-pyrophosphate (PRPP) to anthranilate to yield N-(5'-phosphoribosyl)-anthranilate (PRA). In Francisella tularensis subsp. tularensis (strain WY96-3418), this protein is Anthranilate phosphoribosyltransferase.